A 96-amino-acid polypeptide reads, in one-letter code: Large ribosomal subunit protein uL23 (96 aa).

The protein belongs to the universal ribosomal protein uL23 family. In terms of assembly, part of the 50S ribosomal subunit. Contacts protein L29, and trigger factor when it is bound to the ribosome.

One of the early assembly proteins it binds 23S rRNA. One of the proteins that surrounds the polypeptide exit tunnel on the outside of the ribosome. Forms the main docking site for trigger factor binding to the ribosome. The chain is Large ribosomal subunit protein uL23 from Bacillus cytotoxicus (strain DSM 22905 / CIP 110041 / 391-98 / NVH 391-98).